A 451-amino-acid chain; its full sequence is Tubulin alpha chain (451 aa).

Residue glutamine 11 coordinates GTP. N6-acetyllysine is present on lysine 40. Positions 71, 144, 145, 179, 206, and 228 each coordinate GTP. Glutamate 71 serves as a coordination point for Mg(2+). The active site involves glutamate 254.

The protein belongs to the tubulin family. In terms of assembly, dimer of alpha and beta chains. A typical microtubule is a hollow water-filled tube with an outer diameter of 25 nm and an inner diameter of 15 nM. Alpha-beta heterodimers associate head-to-tail to form protofilaments running lengthwise along the microtubule wall with the beta-tubulin subunit facing the microtubule plus end conferring a structural polarity. Microtubules usually have 13 protofilaments but different protofilament numbers can be found in some organisms and specialized cells. It depends on Mg(2+) as a cofactor. Undergoes a tyrosination/detyrosination cycle, the cyclic removal and re-addition of a C-terminal tyrosine residue by the enzymes tubulin tyrosine carboxypeptidase (TTCP) and tubulin tyrosine ligase (TTL), respectively. Post-translationally, acetylation of alpha chains at Lys-40 stabilizes microtubules and affects affinity and processivity of microtubule motors. This modification has a role in multiple cellular functions, ranging from cell motility, cell cycle progression or cell differentiation to intracellular trafficking and signaling.

Its subcellular location is the cytoplasm. The protein localises to the cytoskeleton. The catalysed reaction is GTP + H2O = GDP + phosphate + H(+). In terms of biological role, tubulin is the major constituent of microtubules, a cylinder consisting of laterally associated linear protofilaments composed of alpha- and beta-tubulin heterodimers. Microtubules grow by the addition of GTP-tubulin dimers to the microtubule end, where a stabilizing cap forms. Below the cap, tubulin dimers are in GDP-bound state, owing to GTPase activity of alpha-tubulin. In Euglena gracilis, this protein is Tubulin alpha chain (TUBA).